We begin with the raw amino-acid sequence, 228 residues long: Prolactin-2A1 (228 aa).

An N-terminal signal peptide occupies residues 1–28 (MQLSVTHPCCRTLILLLVSNLLLWESEA). Cystine bridges form between Cys87–Cys203 and Cys220–Cys228.

It belongs to the somatotropin/prolactin family. In terms of tissue distribution, expressed specifically in the placenta. Expression restricted to the junctional zone of the chorioallantoic placenta.

Its subcellular location is the secreted. The sequence is that of Prolactin-2A1 (Prl2a1) from Mus musculus (Mouse).